Reading from the N-terminus, the 1323-residue chain is MEFPTQPKLVDVKTIIYPPGVKEITDKISNDEVVKRLKMVVKTFMDMDQDSEEEKQQYLPLALHLSSDFFLRNPNKDVRLLVACCLADIFRIYAPEAPYTSHDKLKEIFLFITRQLKGLEDTKSPQFNRYFYLLENLAWVKSYNICFELEDCNEIFIQLFKTLFSVINNSHNQKVQMHMLDLMSSITMEGDGVTQEQLDSILINLISAHKNLNKQAFDLAKVLLKRTAQTIEPCIANFFNQVLVLGKSSVSDLSEHVFDLIQELFAIDPHLLLSVMPQLEFKLKSNDGEERLAVVRLLAKLFGSKDSDLATQNRPLWQCFLGRFNDIHVPVRLESVKFASHCLMNHPDLAKDLTEFLKVRSHDPEEAIRHDVIVTIITAAKKDLFLVNDQLLGFVRERTLDKRWRVRKEAMMGLAQLYKKYCLHGEGGKDAAEKVSWIKDKLLHIYYQNSIDDKLLVEKIFAQQLVPHNLETEERMKCLYYLYASLDPNAVKALNEMWKCQNMLRSHVRELLDLHKQPTSEANTTAMFAKLMTVAKNLPDPGKAQDFVKKFNQVLGEDEKLRSQLEVLISPSCSCKQADVCVRDIARKVANPKQPTNPFLEMVKFLLERIAPVHIDSEAISALVKLMNKSIEGTADDEEEGVSPDSAIRAGLELLKVLSFTHPTSFHSDETYESLLQCLRMEDDKVAEAAIQIFRNTGHRIETDLPQIRSALIPILHQKAKRGTPHQAKQAVHCIHSIFSNKEVQLAQIFEPLSRSLNADVPEQLVTPLVSLGHISMLAPDQFASPMKSVVANFIVKDLLMNDRSNGDKNGKLWCPDEEVSPEVLAKGQAIKLLVRWLLGMKNNQSKSANSTLRLLSAMLVSEGDLTEQKRISKSDMSRLRLAAGAAIMKLAQEPCYHEIITPEQFQLCALVINDECYQVRQIFAQKLHKALVKLQLPLEYMAIFALCAKDPVKERRAHARQCLLKNISIRREYIKQNPVSNEKLLSLLPEYVVPYMIHLLAHDPDFTKPQDIDQLRDIKECLWFMLEVLMTKNENNSHAFMKKLCENIKQTRDAQAPDDPKANEKLFTVCDVALCVVYNKSAPCHSESSKDPVLPLTFFTQPDKDFSSKSYITDEARNLLLTGKPKPMTVLGMVNKPLNATGRRPYSRSTGSEISNNVSINSESDASVANRQSSEVPEIGVSENDENPVRLISVPPAKTETVKNKEVNLDQTAPSNTGTERGKKRSAASAGAENIRKESEEKKVDNISATPTPKPRRGRPPKSESQGSAAKNDETSKPSGRGRKRAAANQESSGAQEAANAKVPKQDSTAKKTAQRQIDLHR.

Residues 385–421 form an HEAT repeat; sequence FLVNDQLLGFVRERTLDKRWRVRKEAMMGLAQLYKKY. Residues 1138-1323 form a disordered region; it reads PLNATGRRPY…TAQRQIDLHR (186 aa). Residues 1153–1165 show a composition bias toward low complexity; the sequence is SEISNNVSINSES. Composition is skewed to polar residues over residues 1166 to 1176 and 1210 to 1220; these read DASVANRQSSE and LDQTAPSNTGT. Over residues 1235 to 1246 the composition is skewed to basic and acidic residues; that stretch reads NIRKESEEKKVD.

In terms of assembly, interacts with the cohesin complex. Binds chromatin in a cohesin-dependent manner.

It localises to the nucleus. May regulate sister chromatid cohesion during mitosis and couple it to DNA replication. This Xenopus laevis (African clawed frog) protein is Sister chromatid cohesion protein PDS5 homolog A-B (pds5a-b).